The chain runs to 137 residues: Acidic phospholipase A2 PL-II (137 aa).

The N-terminal stretch at 1–17 (AVCVSLLGASSIRPLPL) is a signal peptide. 7 disulfides stabilise this stretch: cysteine 28/cysteine 89, cysteine 44/cysteine 136, cysteine 46/cysteine 62, cysteine 61/cysteine 117, cysteine 68/cysteine 110, cysteine 78/cysteine 103, and cysteine 96/cysteine 108. Residues tyrosine 45, glycine 47, and glycine 49 each coordinate Ca(2+). The active site involves histidine 65. Residue aspartate 66 participates in Ca(2+) binding. The active site involves aspartate 111.

Requires Ca(2+) as cofactor. Expressed by the venom gland.

The protein resides in the secreted. It catalyses the reaction a 1,2-diacyl-sn-glycero-3-phosphocholine + H2O = a 1-acyl-sn-glycero-3-phosphocholine + a fatty acid + H(+). Functionally, snake venom phospholipase A2 (PLA2) that may act in the hemostasis system of the prey. Exhibits hydrolytic activities, and prefers the anionic micelles (dPPC with deoxycholate) (54 umol/mg/min) to the zwitterionic micelles (dPPC with Triton X-100) (15 umol/mg/min). PLA2 catalyzes the calcium-dependent hydrolysis of the 2-acyl groups in 3-sn-phosphoglycerides. This Walterinnesia aegyptia (Desert black snake) protein is Acidic phospholipase A2 PL-II.